The following is a 255-amino-acid chain: Anamorsin homolog (255 aa).

The interval 1-163 is N-terminal SAM-like domain; sequence MPKETLVVSK…VRPNWKSKTD (163 aa). The linker stretch occupies residues 164-185; that stretch reads KKSPSMIDAAPIDGYISKAPDY. [2Fe-2S] cluster contacts are provided by Cys188, Cys195, Cys198, and Cys200. Residues 188 to 200 form a fe-S binding site A region; it reads CSTKPRACANCTC. [4Fe-4S] cluster contacts are provided by Cys224, Cys227, Cys235, and Cys238. 2 short sequence motifs (cx2C motif) span residues 224–227 and 235–238; these read CGNC and CESC. The interval 224-238 is fe-S binding site B; sequence CGNCYLGDAFRCESC.

The protein belongs to the anamorsin family. Monomer. The cofactor is [2Fe-2S] cluster. [4Fe-4S] cluster serves as cofactor.

The protein localises to the cytoplasm. It localises to the mitochondrion intermembrane space. Component of the cytosolic iron-sulfur (Fe-S) protein assembly (CIA) machinery. Required for the maturation of extramitochondrial Fe-S proteins. Part of an electron transfer chain functioning in an early step of cytosolic Fe-S biogenesis, facilitating the de novo assembly of a [4Fe-4S] cluster on the cytosolic Fe-S scaffold complex. Electrons are transferred from NADPH via a FAD- and FMN-containing diflavin oxidoreductase. Together with the diflavin oxidoreductase, also required for the assembly of the diferric tyrosyl radical cofactor of ribonucleotide reductase (RNR), probably by providing electrons for reduction during radical cofactor maturation in the catalytic small subunit. The polypeptide is Anamorsin homolog (Theileria annulata).